Here is a 371-residue protein sequence, read N- to C-terminus: RxLR effector protein PITG_12731 (371 aa).

The signal sequence occupies residues 1–24 (MRFYSVLLTIVTLIASTYDAKVNA). The RxLR-dEER signature appears at 43–53 (RMLRADHADER).

It belongs to the RxLR effector family.

The protein resides in the secreted. The protein localises to the host nucleus. Its subcellular location is the host cytoplasm. Functionally, effector that enhances P.infestans colonization of Nicotiana benthamiana leaves. The sequence is that of RxLR effector protein PITG_12731 from Phytophthora infestans (strain T30-4) (Potato late blight agent).